The chain runs to 85 residues: Defensin-like protein 112 (85 aa).

The N-terminal stretch at 1–24 is a signal peptide; that stretch reads MAISKKMLTTFVLTILLAVSFVHC. 4 disulfides stabilise this stretch: Cys40–Cys80, Cys46–Cys71, Cys56–Cys78, and Cys60–Cys79.

This sequence belongs to the DEFL family.

The protein resides in the secreted. In Arabidopsis thaliana (Mouse-ear cress), this protein is Defensin-like protein 112.